The sequence spans 165 residues: Transcription antitermination protein NusB (165 aa).

This sequence belongs to the NusB family.

In terms of biological role, involved in transcription antitermination. Required for transcription of ribosomal RNA (rRNA) genes. Binds specifically to the boxA antiterminator sequence of the ribosomal RNA (rrn) operons. This is Transcription antitermination protein NusB from Bradyrhizobium diazoefficiens (strain JCM 10833 / BCRC 13528 / IAM 13628 / NBRC 14792 / USDA 110).